Here is a 477-residue protein sequence, read N- to C-terminus: tRNA-2-methylthio-N(6)-dimethylallyladenosine synthase (477 aa).

The MTTase N-terminal domain maps to 3 to 120 (KKLHIKTWGC…LPAMIKQVQE (118 aa)). 6 residues coordinate [4Fe-4S] cluster: cysteine 12, cysteine 49, cysteine 83, cysteine 157, cysteine 161, and cysteine 164. The Radical SAM core domain occupies 143-375 (RAEGATAFVS…QHVINNQSMQ (233 aa)). The 64-residue stretch at 378–441 (RAMLGSTQRI…PNSLRGRFIR (64 aa)) folds into the TRAM domain.

This sequence belongs to the methylthiotransferase family. MiaB subfamily. Monomer. [4Fe-4S] cluster is required as a cofactor.

The protein resides in the cytoplasm. It carries out the reaction N(6)-dimethylallyladenosine(37) in tRNA + (sulfur carrier)-SH + AH2 + 2 S-adenosyl-L-methionine = 2-methylsulfanyl-N(6)-dimethylallyladenosine(37) in tRNA + (sulfur carrier)-H + 5'-deoxyadenosine + L-methionine + A + S-adenosyl-L-homocysteine + 2 H(+). In terms of biological role, catalyzes the methylthiolation of N6-(dimethylallyl)adenosine (i(6)A), leading to the formation of 2-methylthio-N6-(dimethylallyl)adenosine (ms(2)i(6)A) at position 37 in tRNAs that read codons beginning with uridine. In Aeromonas salmonicida (strain A449), this protein is tRNA-2-methylthio-N(6)-dimethylallyladenosine synthase.